A 464-amino-acid polypeptide reads, in one-letter code: Adenylyltransferase and sulfurtransferase MOCS3 (464 aa).

ATP-binding positions include G101, D122, 129 to 133 (NNMHR), K146, and 190 to 191 (DN). Zn(2+) contacts are provided by C231 and C234. C248 acts as the Glycyl thioester intermediate; for adenylyltransferase activity in catalysis. Residues C306 and C309 each contribute to the Zn(2+) site. The 105-residue stretch at 358–462 (KKEQHVLLDV…WAANVNPNFP (105 aa)) folds into the Rhodanese domain. Catalysis depends on C422, which acts as the Cysteine persulfide intermediate; for sulfurtransferase activity.

In the N-terminal section; belongs to the HesA/MoeB/ThiF family. UBA4 subfamily. The cofactor is Zn(2+).

It localises to the cytoplasm. It catalyses the reaction [molybdopterin-synthase sulfur-carrier protein]-C-terminal Gly-Gly + ATP + H(+) = [molybdopterin-synthase sulfur-carrier protein]-C-terminal Gly-Gly-AMP + diphosphate. It carries out the reaction [molybdopterin-synthase sulfur-carrier protein]-C-terminal Gly-Gly-AMP + S-sulfanyl-L-cysteinyl-[cysteine desulfurase] + AH2 = [molybdopterin-synthase sulfur-carrier protein]-C-terminal-Gly-aminoethanethioate + L-cysteinyl-[cysteine desulfurase] + A + AMP + 2 H(+). The protein operates within tRNA modification; 5-methoxycarbonylmethyl-2-thiouridine-tRNA biosynthesis. It participates in cofactor biosynthesis; molybdopterin biosynthesis. Its function is as follows. Plays a central role in 2-thiolation of mcm(5)S(2)U at tRNA wobble positions of cytosolic tRNA(Lys), tRNA(Glu) and tRNA(Gln). Also essential during biosynthesis of the molybdenum cofactor. Acts by mediating the C-terminal thiocarboxylation of sulfur carriers URM1 and MOCS2A. Its N-terminus first activates URM1 and MOCS2A as acyl-adenylates (-COAMP), then the persulfide sulfur on the catalytic cysteine is transferred to URM1 and MOCS2A to form thiocarboxylation (-COSH) of their C-terminus. The reaction probably involves hydrogen sulfide that is generated from the persulfide intermediate and that acts as a nucleophile towards URM1 and MOCS2A. Subsequently, a transient disulfide bond is formed. Does not use thiosulfate as sulfur donor; NFS1 probably acting as a sulfur donor for thiocarboxylation reactions. In Arabidopsis thaliana (Mouse-ear cress), this protein is Adenylyltransferase and sulfurtransferase MOCS3.